Consider the following 856-residue polypeptide: Alanine/arginine aminopeptidase (856 aa).

Substrate is bound by residues Glu132 and Gly264–Asn268. His300 contacts Zn(2+). Glu301 acts as the Proton acceptor in catalysis. Positions 304 and 323 each coordinate Zn(2+).

The protein belongs to the peptidase M1 family. Requires Zn(2+) as cofactor.

Its function is as follows. Positive effector of glycogen accumulation. May be involved in nutrient-sensing. In Saccharomyces cerevisiae (strain ATCC 204508 / S288c) (Baker's yeast), this protein is Alanine/arginine aminopeptidase (AAP1).